Here is a 500-residue protein sequence, read N- to C-terminus: Cytochrome P450 11B3, mitochondrial (500 aa).

A mitochondrion-targeting transit peptide spans 1–24 (MALRVTADVWLARPWQCLHRTRAL). C447 is a heme binding site.

The protein belongs to the cytochrome P450 family. It depends on heme as a cofactor. As to expression, expressed in the adrenal cortex and in different brain tissues, including hippocampus, hypothalamus, cerebellum, cerebral cortex, and midbrain.

It localises to the mitochondrion membrane. The enzyme catalyses a steroid + 2 reduced [adrenodoxin] + O2 + 2 H(+) = an 11beta-hydroxysteroid + 2 oxidized [adrenodoxin] + H2O. The catalysed reaction is 21-hydroxyprogesterone + 2 reduced [adrenodoxin] + O2 + 2 H(+) = corticosterone + 2 oxidized [adrenodoxin] + H2O. It catalyses the reaction 21-hydroxyprogesterone + 2 reduced [adrenodoxin] + O2 + 2 H(+) = 18-hydroxy-11-deoxycorticosterone + 2 oxidized [adrenodoxin] + H2O. It carries out the reaction 21-hydroxyprogesterone + 2 reduced [adrenodoxin] + O2 + 2 H(+) = 19-hydroxy-11-deoxycorticosterone + 2 oxidized [adrenodoxin] + H2O. A cytochrome P450 monooxygenase involved in the biosynthesis of adrenal corticoids. Catalyzes the hydroxylation of steroids at 11beta, 18- or 19-positions, with preferred regioselectivity at 11beta and 18. Converts 11-deoxycorticosterone into corticosterone, 18-hydroxy-11-deoxycorticosterone, and/or 19-hydroxy-11-deoxycorticosterone, but not to 18-hydroxycorticosterone or aldosterone. Mechanistically, uses molecular oxygen inserting one oxygen atom into a substrate for hydroxylation and reducing the second into a water molecule. Two electrons are provided by NADPH via a two-protein mitochondrial transfer system comprising flavoprotein FDXR (adrenodoxin/ferredoxin reductase) and nonheme iron-sulfur protein FDX1 or FDX2 (adrenodoxin/ferredoxin). The chain is Cytochrome P450 11B3, mitochondrial (Cyp11b3) from Rattus norvegicus (Rat).